The chain runs to 407 residues: Pleckstrin homology-like domain family A member 1 (407 aa).

Basic and acidic residues-rich tracts occupy residues 1-11 and 54-63; these read MRRTPAAERLS and RSAEDGREQP. The disordered stretch occupies residues 1 to 67; sequence MRRTPAAERL…DGREQPAHGS (67 aa). Residues 149-184 enclose the PH domain; that stretch reads SGCKALKEGVLEKRSDGLLQLWKKKCCILTEEGLLL. Disordered regions lie at residues 188-224 and 296-407; these read KQVQ…EPPA and QQHL…SNSA. Composition is skewed to low complexity over residues 189–204 and 297–319; these read QVQH…QPGQ and QHLV…QPQI. The interval 312–348 is 15 X 2 AA repeats of P-Q; the sequence is PQPQQPQIQPQPQPQIQPQPQPQPQPQPQPQQQPQPQ. The segment covering 320–344 has biased composition (pro residues); the sequence is QPQPQPQIQPQPQPQPQPQPQPQQQ. Positions 354–381 are 11 X 2 AA repeats of P-H; that stretch reads PHPHPHLYPHPHPHAHSHPHPHPHPHPH. Positions 354 to 384 are enriched in basic residues; the sequence is PHPHPHLYPHPHPHAHSHPHPHPHPHPHQLQ. Residues 385 to 395 are compositionally biased toward low complexity; sequence HAHQPLHSQPQ.

As to quaternary structure, interacts with RPL14, EIF3S7 and PABPC4.

Its subcellular location is the cytoplasm. It localises to the cytoplasmic vesicle. It is found in the nucleus. The protein localises to the nucleolus. Functionally, seems to be involved in regulation of apoptosis. May be involved in detachment-mediated programmed cell death. May mediate apoptosis during neuronal development. May be involved in regulation of anti-apoptotic effects of IGF1. May be involved in translational regulation. This is Pleckstrin homology-like domain family A member 1 (Phlda1) from Rattus norvegicus (Rat).